The sequence spans 488 residues: Probable phenylalanine--tRNA ligase alpha subunit (488 aa).

Residues 1–146 form a contains the major tRNA-Phe binding sites region; it reads MSIEQDILNL…KRKLVDINKK (146 aa). L-phenylalanine contacts are provided by residues T315, 363–365, and Y403; that span reads QVE. E405 lines the Mg(2+) pocket. F429 serves as a coordination point for L-phenylalanine.

This sequence belongs to the class-II aminoacyl-tRNA synthetase family. Phe-tRNA synthetase alpha subunit type 2 subfamily. In terms of assembly, tetramer of two alpha and two beta subunits. Mg(2+) is required as a cofactor.

It is found in the cytoplasm. The enzyme catalyses tRNA(Phe) + L-phenylalanine + ATP = L-phenylalanyl-tRNA(Phe) + AMP + diphosphate + H(+). This chain is Probable phenylalanine--tRNA ligase alpha subunit, found in Enterocytozoon bieneusi (strain H348) (Microsporidian parasite).